Here is a 1156-residue protein sequence, read N- to C-terminus: MSKREAFLQATAKDSVEDFLSFIQLHKDVSDPFDLNELLQELSRKQKEELWEKLKTLLTEALVANPVERWQNIDDDSDDDMEVESSSDVKQTMCVIHGVTIAAAASLCVIDEDVCYETLLECAAILSGIVHALPKSESHITLAIRHLCEAWWEKGLQGKEEFGKTAFLLLLAKSLEVKCVVADIGRLWHLHQTLLSFDFNSEESHNVKDLLLQCFLSINHIKKEEGRRFLSFLFSWDVNFIKMIHGTIKNQLQCLPKSLMTHIADIYFRAWKKASGDVLQTIEQSCIQDFMHHGVHLPRNSPLHPKVREVLSYFHQQKLRQGVEEMLYNLYQPIIWRGLKARNSEVRSNAALLFVEAFPIRDPNLNHEDMDNEIQKQFEELFNLLEDPQPLVRSTGVLGVCKITAKYWEMIPPAILTDLLRKILGDLAADVSSADVRCSVFKCLPILLDNKLSHPLLENMLPALKFCLHDNSEKVRVAFVDMLLKIKAVRAAKFWKICPMEQILARLEVDSRPVSRRIVNLLFNSFFPVNQQEEVWCERCVALIQMNPAAARKFYQYAYEHTAPTNIAKLMLTIRRCLNACINRTVPNEDTEDEDDDEGDGEGIVRGDSEKENKSVLENVLSTEDSASMASLLEIVVVLWRSIRKALDQNEEAKTYTISKFASVLPEYFKAFKEERCTVPLIILASFMPPAAVPTFSCSVLSKLRHLDSGADEQKYSTLIDCLCRWGQVGHVLELASEWLSESYPEKRGRKDSNRQVRIQDTMESKPALALDYIEYIMTHTMNRDCLLSLQTKKLNQLLKVLGLVKEVLFCYIKPSEAVTHNVNQDTALRAFSLYCRLSIHLQHKFSSEGRTYLSVLEDTGGWIESQVLPTLESNQDISEEPRNMCHQILKAYLTVCKDVLMVGLADSEFQAQLLQITLSVIQTEKCHNCLPMLFYVLKEITELCLAHKMSDASVECDEMLDAIQKAFHKSLETVARRLRKQREEALQLLQTIQLPLGEFVHTVQCWHTASKVLHRGTLSTLLAAVVVEISHSLRKITDLSELTPPSSISDLPPLSKCIMTIIVKSPSAVSSFLDELTECITLEEVEGILSLTAALYVAVVSSKRKQIPPAVKNTASAIYRKLKNFCEVTMDDAGSIERAVYESSMRILNEMLHPS.

The HEAT repeat unit spans residues 460–498; the sequence is MLPALKFCLHDNSEKVRVAFVDMLLKIKAVRAAKFWKIC. The tract at residues 587-611 is disordered; the sequence is PNEDTEDEDDDEGDGEGIVRGDSEK. Over residues 589–601 the composition is skewed to acidic residues; the sequence is EDTEDEDDDEGDG.

As to quaternary structure, component of the condensin-2 complex, which contains the smc2 and smc4 heterodimer, and three non SMC subunits that probably regulate the complex: ncaph2, ncapd3 and ncapg2.

Its subcellular location is the nucleus. Regulatory subunit of the condensin-2 complex, a complex which establishes mitotic chromosome architecture and is involved in physical rigidity of the chromatid axis. This is Condensin-2 complex subunit G2 (ncapg2) from Xenopus laevis (African clawed frog).